A 328-amino-acid chain; its full sequence is Ribosomal RNA small subunit methyltransferase C (328 aa).

Belongs to the methyltransferase superfamily. RsmC family. In terms of assembly, monomer.

It localises to the cytoplasm. It carries out the reaction guanosine(1207) in 16S rRNA + S-adenosyl-L-methionine = N(2)-methylguanosine(1207) in 16S rRNA + S-adenosyl-L-homocysteine + H(+). Its function is as follows. Specifically methylates the guanine in position 1207 of 16S rRNA in the 30S particle. The protein is Ribosomal RNA small subunit methyltransferase C of Pasteurella multocida (strain Pm70).